Consider the following 443-residue polypeptide: Cobyrinate a,c-diamide synthase (443 aa).

One can recognise a GATase cobBQ-type domain in the interval 244–435; that stretch reads KVSVAMDSAF…AHIHFLSNPR (192 aa). The active-site Nucleophile is the cysteine 327.

Belongs to the CobB/CbiA family. Requires Mg(2+) as cofactor.

The enzyme catalyses cob(II)yrinate + 2 L-glutamine + 2 ATP + 2 H2O = cob(II)yrinate a,c diamide + 2 L-glutamate + 2 ADP + 2 phosphate + 2 H(+). It participates in cofactor biosynthesis; adenosylcobalamin biosynthesis; cob(II)yrinate a,c-diamide from sirohydrochlorin (anaerobic route): step 10/10. Its function is as follows. Catalyzes the ATP-dependent amidation of the two carboxylate groups at positions a and c of cobyrinate, using either L-glutamine or ammonia as the nitrogen source. The protein is Cobyrinate a,c-diamide synthase of Thermoplasma acidophilum (strain ATCC 25905 / DSM 1728 / JCM 9062 / NBRC 15155 / AMRC-C165).